The following is a 452-amino-acid chain: GTPase Der (452 aa).

EngA-type G domains follow at residues 4–169 and 177–352; these read PIVA…PPPE and IKVA…EEHR. GTP-binding positions include 10-17, 57-61, 120-123, 183-190, 230-234, and 295-298; these read GRPNVGKS, DTGGL, NKCE, DTAGI, and NKWD. The 86-residue stretch at 353–438 folds into the KH-like domain; that stretch reads RRVTTAVINE…PIRLLWRGKK (86 aa).

This sequence belongs to the TRAFAC class TrmE-Era-EngA-EngB-Septin-like GTPase superfamily. EngA (Der) GTPase family. As to quaternary structure, associates with the 50S ribosomal subunit.

Its function is as follows. GTPase that plays an essential role in the late steps of ribosome biogenesis. In Rippkaea orientalis (strain PCC 8801 / RF-1) (Cyanothece sp. (strain PCC 8801)), this protein is GTPase Der.